The following is a 207-amino-acid chain: Ribosomal RNA large subunit methyltransferase E (207 aa).

Positions 60, 62, 80, 96, and 121 each coordinate S-adenosyl-L-methionine. Lys161 acts as the Proton acceptor in catalysis.

The protein belongs to the class I-like SAM-binding methyltransferase superfamily. RNA methyltransferase RlmE family.

Its subcellular location is the cytoplasm. The enzyme catalyses uridine(2552) in 23S rRNA + S-adenosyl-L-methionine = 2'-O-methyluridine(2552) in 23S rRNA + S-adenosyl-L-homocysteine + H(+). Its function is as follows. Specifically methylates the uridine in position 2552 of 23S rRNA at the 2'-O position of the ribose in the fully assembled 50S ribosomal subunit. This Pseudomonas paraeruginosa (strain DSM 24068 / PA7) (Pseudomonas aeruginosa (strain PA7)) protein is Ribosomal RNA large subunit methyltransferase E.